The following is a 1081-amino-acid chain: Dyslexia-associated protein KIAA0319 homolog (1081 aa).

An N-terminal signal peptide occupies residues 1-22 (MVSPPGVLSSLLLLAAMAGGSS). The MANSC domain maps to 23-99 (QQCSEGRTYS…PRTTGPIRSY (77 aa)). The Extracellular segment spans residues 23-964 (QQCSEGRTYS…WDGESNCEWS (942 aa)). 3 disordered regions span residues 141–160 (LPFL…SDDY), 168–216 (LQPS…DLTP), and 228–298 (NEST…TTVE). Polar residues-rich tracts occupy residues 197–209 (ASAT…ASTE), 228–253 (NEST…TASP), and 283–298 (HNPS…TTVE). PKD domains are found at residues 345 to 436 (AVSA…VMPA), 444 to 533 (VAIV…IRGS), 539 to 629 (VANA…VQAE), 630 to 723 (NNQA…VKKE), and 729 to 820 (RAQA…VLPD). N-linked (GlcNAc...) asparagine glycans are attached at residues Asn-430 and Asn-522. A helical transmembrane segment spans residues 965-985 (VFYVAALALTLTVLTGAVTWV). Topologically, residues 986–1081 (CICCCRRRKR…VSFGYYSKDR (96 aa)) are cytoplasmic. An Endocytosis signal motif is present at residues 1004–1007 (YTIL).

In terms of assembly, homodimer. Interacts with AP2M1; required for clathrin-mediated endocytosis. N-glycosylated. In terms of processing, O-glycosylated. Post-translationally, shedding of the extracellular domain and intramembrane cleavage produce several proteolytic products. The intramembrane cleavage releases a soluble cytoplasmic polypeptide that translocates to the nucleolus. Highly expressed during development in ventricular zone, intermediate zone, cortical plate, striatum, hippocampus, and brain stem.

The protein resides in the cell membrane. It localises to the early endosome membrane. Its function is as follows. Involved in neuronal migration during development of the cerebral neocortex. May function in a cell autonomous and a non-cell autonomous manner and play a role in appropriate adhesion between migrating neurons and radial glial fibers. May also regulate growth and differentiation of dendrites. The polypeptide is Dyslexia-associated protein KIAA0319 homolog (Rattus norvegicus (Rat)).